We begin with the raw amino-acid sequence, 94 residues long: Co-chaperonin GroES (94 aa).

The protein belongs to the GroES chaperonin family. Heptamer of 7 subunits arranged in a ring. Interacts with the chaperonin GroEL.

The protein localises to the cytoplasm. In terms of biological role, together with the chaperonin GroEL, plays an essential role in assisting protein folding. The GroEL-GroES system forms a nano-cage that allows encapsulation of the non-native substrate proteins and provides a physical environment optimized to promote and accelerate protein folding. GroES binds to the apical surface of the GroEL ring, thereby capping the opening of the GroEL channel. The sequence is that of Co-chaperonin GroES from Streptococcus pneumoniae serotype 19F (strain G54).